The sequence spans 271 residues: Ribosomal RNA small subunit methyltransferase A (271 aa).

L20, G45, E66, D90, and N112 together coordinate S-adenosyl-L-methionine.

This sequence belongs to the class I-like SAM-binding methyltransferase superfamily. rRNA adenine N(6)-methyltransferase family. RsmA subfamily.

The protein resides in the cytoplasm. It carries out the reaction adenosine(1518)/adenosine(1519) in 16S rRNA + 4 S-adenosyl-L-methionine = N(6)-dimethyladenosine(1518)/N(6)-dimethyladenosine(1519) in 16S rRNA + 4 S-adenosyl-L-homocysteine + 4 H(+). Its function is as follows. Specifically dimethylates two adjacent adenosines (A1518 and A1519) in the loop of a conserved hairpin near the 3'-end of 16S rRNA in the 30S particle. May play a critical role in biogenesis of 30S subunits. The protein is Ribosomal RNA small subunit methyltransferase A of Blochmanniella floridana.